The following is a 440-amino-acid chain: Thymidine phosphorylase (440 aa).

Belongs to the thymidine/pyrimidine-nucleoside phosphorylase family. As to quaternary structure, homodimer.

The enzyme catalyses thymidine + phosphate = 2-deoxy-alpha-D-ribose 1-phosphate + thymine. Its pathway is pyrimidine metabolism; dTMP biosynthesis via salvage pathway; dTMP from thymine: step 1/2. The enzymes which catalyze the reversible phosphorolysis of pyrimidine nucleosides are involved in the degradation of these compounds and in their utilization as carbon and energy sources, or in the rescue of pyrimidine bases for nucleotide synthesis. This chain is Thymidine phosphorylase, found in Yersinia pestis.